The following is a 524-amino-acid chain: Translation initiation factor eIF2B subunit delta (524 aa).

Residues 1–155 (MAAVAVAVRE…EHTPADDPTL (155 aa)) are disordered. The residue at position 2 (A2) is an N-acetylalanine. Basic and acidic residues-rich tracts occupy residues 8–20 (VREE…KTEL) and 31–40 (LTQEEKLQLR). S12 is modified (phosphoserine). Positions 41 to 51 (KEKKQQKKKRK) are enriched in basic residues. T86 is modified (phosphothreonine). Residues 96 to 121 (SKAELRAERRAKQEAERALKQARKGE) show a composition bias toward basic and acidic residues. Residues 130 to 140 (CPSTAGETTSG) are compositionally biased toward polar residues. Positions 171 to 180 (RKDYGSKVSL) are may bind the chemical integrated stress response (ISR) inhibitor ISRIB.

Belongs to the eIF-2B alpha/beta/delta subunits family. As to quaternary structure, component of the translation initiation factor 2B (eIF2B) complex which is a heterodecamer of two sets of five different subunits: alpha, beta, gamma, delta and epsilon. Subunits alpha, beta and delta comprise a regulatory subcomplex and subunits epsilon and gamma comprise a catalytic subcomplex. Within the complex, the hexameric regulatory complex resides at the center, with the two heterodimeric catalytic subcomplexes bound on opposite sides.

Its subcellular location is the cytoplasm. The protein resides in the cytosol. Its activity is regulated as follows. Activated by the chemical integrated stress response (ISR) inhibitor ISRIB which stimulates guanine nucleotide exchange factor activity for both phosphorylated and unphosphorylated eIF2. Its function is as follows. Acts as a component of the translation initiation factor 2B (eIF2B) complex, which catalyzes the exchange of GDP for GTP on eukaryotic initiation factor 2 (eIF2) gamma subunit. Its guanine nucleotide exchange factor activity is repressed when bound to eIF2 complex phosphorylated on the alpha subunit, thereby limiting the amount of methionyl-initiator methionine tRNA available to the ribosome and consequently global translation is repressed. The chain is Translation initiation factor eIF2B subunit delta (Eif2b4) from Mus musculus (Mouse).